Consider the following 448-residue polypeptide: NADP-specific glutamate dehydrogenase (448 aa).

The substrate site is built by lysine 88, glutamine 109, and lysine 112. Catalysis depends on lysine 124, which acts as the Proton donor. Residue glycine 163 coordinates substrate. NADP(+) contacts are provided by threonine 207 and asparagine 238. Serine 381 contributes to the substrate binding site.

The protein belongs to the Glu/Leu/Phe/Val dehydrogenases family. Homohexamer.

It catalyses the reaction L-glutamate + NADP(+) + H2O = 2-oxoglutarate + NH4(+) + NADPH + H(+). In terms of biological role, catalyzes the reversible oxidative deamination of glutamate to alpha-ketoglutarate and ammonia. The polypeptide is NADP-specific glutamate dehydrogenase (gdhA) (Helicobacter pylori (strain ATCC 700392 / 26695) (Campylobacter pylori)).